An 89-amino-acid polypeptide reads, in one-letter code: MTAVAQKCGPKSVSRPKHWSEEVEEAYRFQCAGYRDAIEYSDIKQKEPERWPHNGYVKKLQRKDGCFVYFDKTRECQDKDVNKTKMYGY.

Belongs to the MEIG1 family.

This Nematostella vectensis (Starlet sea anemone) protein is Meiosis expressed gene 1 protein homolog.